Here is a 275-residue protein sequence, read N- to C-terminus: 5'-nucleotidase SurE (275 aa).

Residues Asp-12, Asp-13, Ser-44, and Asn-102 each coordinate a divalent metal cation.

It belongs to the SurE nucleotidase family. It depends on a divalent metal cation as a cofactor.

Its subcellular location is the cytoplasm. It carries out the reaction a ribonucleoside 5'-phosphate + H2O = a ribonucleoside + phosphate. Functionally, nucleotidase that shows phosphatase activity on nucleoside 5'-monophosphates. The chain is 5'-nucleotidase SurE from Synechococcus sp. (strain RCC307).